The primary structure comprises 239 residues: Probable transcriptional regulatory protein BLi00754/BL02339 (239 aa).

The protein belongs to the TACO1 family. YeeN subfamily.

The protein localises to the cytoplasm. In Bacillus licheniformis (strain ATCC 14580 / DSM 13 / JCM 2505 / CCUG 7422 / NBRC 12200 / NCIMB 9375 / NCTC 10341 / NRRL NRS-1264 / Gibson 46), this protein is Probable transcriptional regulatory protein BLi00754/BL02339.